We begin with the raw amino-acid sequence, 531 residues long: CTP synthase (531 aa).

The interval 1-267 is amidoligase domain; the sequence is MTKYIIITGG…ASKILSKLNL (267 aa). Ser13 contacts CTP. A UTP-binding site is contributed by Ser13. ATP is bound at residue 14–19; the sequence is SVGKGT. Tyr54 contacts L-glutamine. An ATP-binding site is contributed by Asp71. Residues Asp71 and Glu141 each contribute to the Mg(2+) site. CTP contacts are provided by residues 148-150, 188-193, and Lys224; these read DIE and KTKPLQ. UTP-binding positions include 188-193 and Lys224; that span reads KTKPLQ. The Glutamine amidotransferase type-1 domain occupies 292–531; the sequence is KIALVGKYTK…IGFLRAAAGV (240 aa). Residue Gly355 participates in L-glutamine binding. Cys382 acts as the Nucleophile; for glutamine hydrolysis in catalysis. Residues 383–386, Glu406, and Arg463 each bind L-glutamine; that span reads YGMQ. Active-site residues include His507 and Glu509.

The protein belongs to the CTP synthase family. Homotetramer.

The catalysed reaction is UTP + L-glutamine + ATP + H2O = CTP + L-glutamate + ADP + phosphate + 2 H(+). The enzyme catalyses L-glutamine + H2O = L-glutamate + NH4(+). It carries out the reaction UTP + NH4(+) + ATP = CTP + ADP + phosphate + 2 H(+). It functions in the pathway pyrimidine metabolism; CTP biosynthesis via de novo pathway; CTP from UDP: step 2/2. With respect to regulation, allosterically activated by GTP, when glutamine is the substrate; GTP has no effect on the reaction when ammonia is the substrate. The allosteric effector GTP functions by stabilizing the protein conformation that binds the tetrahedral intermediate(s) formed during glutamine hydrolysis. Inhibited by the product CTP, via allosteric rather than competitive inhibition. Catalyzes the ATP-dependent amination of UTP to CTP with either L-glutamine or ammonia as the source of nitrogen. Regulates intracellular CTP levels through interactions with the four ribonucleotide triphosphates. This is CTP synthase from Sulfurisphaera tokodaii (strain DSM 16993 / JCM 10545 / NBRC 100140 / 7) (Sulfolobus tokodaii).